The sequence spans 341 residues: Pyrophosphate--fructose 6-phosphate 1-phosphotransferase (341 aa).

G10 is a diphosphate binding site. E103 serves as a coordination point for Mg(2+). Substrate is bound by residues T125–D127, R162, M169–R171, E221, R265, and H271–R274. D127 acts as the Proton acceptor in catalysis.

Belongs to the phosphofructokinase type A (PFKA) family. Mixed-substrate PFK group III subfamily. In terms of assembly, homodimer or homotetramer. Requires Mg(2+) as cofactor.

The protein resides in the cytoplasm. It catalyses the reaction beta-D-fructose 6-phosphate + diphosphate = beta-D-fructose 1,6-bisphosphate + phosphate + H(+). It participates in carbohydrate degradation; glycolysis; D-glyceraldehyde 3-phosphate and glycerone phosphate from D-glucose: step 3/4. With respect to regulation, non-allosteric. Functionally, catalyzes the phosphorylation of D-fructose 6-phosphate, the first committing step of glycolysis. Uses inorganic phosphate (PPi) as phosphoryl donor instead of ATP like common ATP-dependent phosphofructokinases (ATP-PFKs), which renders the reaction reversible, and can thus function both in glycolysis and gluconeogenesis. Consistently, PPi-PFK can replace the enzymes of both the forward (ATP-PFK) and reverse (fructose-bisphosphatase (FBPase)) reactions. This is Pyrophosphate--fructose 6-phosphate 1-phosphotransferase from Amycolatopsis mediterranei (strain S699) (Nocardia mediterranei).